The sequence spans 352 residues: Rhodopsin (352 aa).

The Extracellular portion of the chain corresponds to 1 to 36; that stretch reads MNGTEGPFFYIPMVNTTGIVRSPYEYPQYYLVNPAA. 2 N-linked (GlcNAc...) asparagine glycosylation sites follow: asparagine 2 and asparagine 15. A helical membrane pass occupies residues 37–61; the sequence is YAALGAYMFFLILTGFPINFLTLYV. The Cytoplasmic segment spans residues 62–73; it reads TLEHKKLRTALN. A helical transmembrane segment spans residues 74–96; the sequence is LILLNLAVADLFMVFGGFTTTMY. Over 97–110 the chain is Extracellular; the sequence is TSMHGYFVLGRLGC. A disulfide bridge connects residues cysteine 110 and cysteine 187. Residues 111-133 traverse the membrane as a helical segment; the sequence is NVEGFFATLGGEIALWSLVVLAV. The 'Ionic lock' involved in activated form stabilization signature appears at 134-136; sequence ERW. The Cytoplasmic portion of the chain corresponds to 134 to 152; sequence ERWVVVCKPISNFRFTENH. A helical transmembrane segment spans residues 153 to 173; the sequence is AIMGVAFSWIMAATCAVPPLV. At 174 to 202 the chain is on the extracellular side; the sequence is GWSRYIPEGMQCSCGVDYYTRAEGFNNES. Residues 203-224 form a helical membrane-spanning segment; it reads FVIYMFIVHFLAPLIVIFFCYG. The Cytoplasmic portion of the chain corresponds to 225–252; sequence RLLCAVKEAAAAQQESETTQRAEREVTR. The chain crosses the membrane as a helical span at residues 253–274; that stretch reads MVIIMVIGFLTSWLPYASVAWY. Topologically, residues 275-286 are extracellular; sequence IFTHQGTEFGPL. A helical membrane pass occupies residues 287–308; the sequence is FMTIPAFFAKSSALYNPMIYIC. Lysine 296 is subject to N6-(retinylidene)lysine. Residues 309 to 352 lie on the Cytoplasmic side of the membrane; the sequence is MNKQFRHCMITTLCCGKNPFEEEEGASTTKTEASSVSSSSVSPA. S-palmitoyl cysteine attachment occurs at residues cysteine 322 and cysteine 323. Residues 331–352 are disordered; the sequence is EEGASTTKTEASSVSSSSVSPA. Residues 342-352 show a composition bias toward low complexity; the sequence is SSVSSSSVSPA.

It belongs to the G-protein coupled receptor 1 family. Opsin subfamily. Phosphorylated on some or all of the serine and threonine residues present in the C-terminal region. Post-translationally, contains one covalently linked retinal chromophore.

The protein localises to the membrane. Its subcellular location is the cell projection. The protein resides in the cilium. It localises to the photoreceptor outer segment. Its function is as follows. Photoreceptor required for image-forming vision at low light intensity. While most salt water fish species use retinal as chromophore, most freshwater fish use 3-dehydroretinal, or a mixture of retinal and 3-dehydroretinal. Light-induced isomerization of 11-cis to all-trans retinal triggers a conformational change that activates signaling via G-proteins. Subsequent receptor phosphorylation mediates displacement of the bound G-protein alpha subunit by arrestin and terminates signaling. This chain is Rhodopsin (rho), found in Pomatoschistus minutus (Sand goby).